A 274-amino-acid chain; its full sequence is Diaminopimelate epimerase (274 aa).

The substrate site is built by N13, Q45, and N63. C72 (proton donor) is an active-site residue. Residues 73-74, N158, N191, and 209-210 each bind substrate; these read GN and ER. The active-site Proton acceptor is C218. 219-220 is a substrate binding site; it reads GT.

Belongs to the diaminopimelate epimerase family. Homodimer.

Its subcellular location is the cytoplasm. The catalysed reaction is (2S,6S)-2,6-diaminopimelate = meso-2,6-diaminopimelate. Its pathway is amino-acid biosynthesis; L-lysine biosynthesis via DAP pathway; DL-2,6-diaminopimelate from LL-2,6-diaminopimelate: step 1/1. Its function is as follows. Catalyzes the stereoinversion of LL-2,6-diaminopimelate (L,L-DAP) to meso-diaminopimelate (meso-DAP), a precursor of L-lysine and an essential component of the bacterial peptidoglycan. In Pelagibacter ubique (strain HTCC1062), this protein is Diaminopimelate epimerase.